Reading from the N-terminus, the 548-residue chain is tRNA (guanine(26)-N(2))-dimethyltransferase (548 aa).

The region spanning 30–470 is the Trm1 methyltransferase domain; the sequence is ASLTEGSAII…APWSFVWDVL (441 aa). Residues R57, R137, D155, and A186 each coordinate S-adenosyl-L-methionine. Zn(2+) is bound by residues C317, C320, C354, and C357. The tract at residues 523-548 is disordered; it reads QMNPTENWGPKSKPGKRTIAEVDSKS.

This sequence belongs to the class I-like SAM-binding methyltransferase superfamily. Trm1 family.

It localises to the mitochondrion. Its subcellular location is the nucleus. It is found in the cytoplasm. It carries out the reaction guanosine(26) in tRNA + 2 S-adenosyl-L-methionine = N(2)-dimethylguanosine(26) in tRNA + 2 S-adenosyl-L-homocysteine + 2 H(+). In terms of biological role, dimethylates a single guanine residue at position 26 of nuclear- and mitochondrial-encoded tRNAs using S-adenosyl-L-methionine as donor of the methyl groups. Also has tRNA strand annealing and dissociation activity independently of its tRNA guanine-dimethyltransferase activity. This Schizosaccharomyces pombe (strain 972 / ATCC 24843) (Fission yeast) protein is tRNA (guanine(26)-N(2))-dimethyltransferase.